The sequence spans 119 residues: MITKQDKNQVRKKRHARVRSKISGTAERPRLNVFRSNKNIYAQLIDDVAGVTIVSASSQENGFEGAGSNVEAASKIGETIAKRAAEKNITAVVFDRGGYLYHGRVKALAEAARENGLEF.

A disordered region spans residues 1 to 24 (MITKQDKNQVRKKRHARVRSKISG). Over residues 10-20 (VRKKRHARVRS) the composition is skewed to basic residues.

This sequence belongs to the universal ribosomal protein uL18 family. As to quaternary structure, part of the 50S ribosomal subunit; part of the 5S rRNA/L5/L18/L25 subcomplex. Contacts the 5S and 23S rRNAs.

Its function is as follows. This is one of the proteins that bind and probably mediate the attachment of the 5S RNA into the large ribosomal subunit, where it forms part of the central protuberance. In Lysinibacillus sphaericus (strain C3-41), this protein is Large ribosomal subunit protein uL18.